We begin with the raw amino-acid sequence, 117 residues long: MIYGIGIDLIEIERIKNLQNQTKFIERILTIEERDKLNQYTHEQRRLEFLAGRFTVKEAFSKALGTGLGKSVSFQDINCYNDALGKPCIDYPGFYTHVSITHTENYAMSQVILEKNE.

Mg(2+)-binding residues include D8 and E58.

Belongs to the P-Pant transferase superfamily. AcpS family. Requires Mg(2+) as cofactor.

The protein localises to the cytoplasm. It catalyses the reaction apo-[ACP] + CoA = holo-[ACP] + adenosine 3',5'-bisphosphate + H(+). Its function is as follows. Transfers the 4'-phosphopantetheine moiety from coenzyme A to a Ser of acyl-carrier-protein. The polypeptide is Holo-[acyl-carrier-protein] synthase (Staphylococcus epidermidis (strain ATCC 35984 / DSM 28319 / BCRC 17069 / CCUG 31568 / BM 3577 / RP62A)).